The chain runs to 181 residues: Crossover junction endodeoxyribonuclease RuvC (181 aa).

Residues aspartate 8, glutamate 67, and aspartate 139 contribute to the active site. Residues aspartate 8, glutamate 67, and aspartate 139 each contribute to the Mg(2+) site.

The protein belongs to the RuvC family. In terms of assembly, homodimer which binds Holliday junction (HJ) DNA. The HJ becomes 2-fold symmetrical on binding to RuvC with unstacked arms; it has a different conformation from HJ DNA in complex with RuvA. In the full resolvosome a probable DNA-RuvA(4)-RuvB(12)-RuvC(2) complex forms which resolves the HJ. It depends on Mg(2+) as a cofactor.

It is found in the cytoplasm. It catalyses the reaction Endonucleolytic cleavage at a junction such as a reciprocal single-stranded crossover between two homologous DNA duplexes (Holliday junction).. In terms of biological role, the RuvA-RuvB-RuvC complex processes Holliday junction (HJ) DNA during genetic recombination and DNA repair. Endonuclease that resolves HJ intermediates. Cleaves cruciform DNA by making single-stranded nicks across the HJ at symmetrical positions within the homologous arms, yielding a 5'-phosphate and a 3'-hydroxyl group; requires a central core of homology in the junction. The consensus cleavage sequence is 5'-(A/T)TT(C/G)-3'. Cleavage occurs on the 3'-side of the TT dinucleotide at the point of strand exchange. HJ branch migration catalyzed by RuvA-RuvB allows RuvC to scan DNA until it finds its consensus sequence, where it cleaves and resolves the cruciform DNA. This chain is Crossover junction endodeoxyribonuclease RuvC, found in Acinetobacter baumannii (strain SDF).